The chain runs to 245 residues: 1-(5-phosphoribosyl)-5-[(5-phosphoribosylamino)methylideneamino] imidazole-4-carboxamide isomerase (245 aa).

The Proton acceptor role is filled by aspartate 8. Aspartate 130 functions as the Proton donor in the catalytic mechanism.

This sequence belongs to the HisA/HisF family.

It localises to the cytoplasm. The enzyme catalyses 1-(5-phospho-beta-D-ribosyl)-5-[(5-phospho-beta-D-ribosylamino)methylideneamino]imidazole-4-carboxamide = 5-[(5-phospho-1-deoxy-D-ribulos-1-ylimino)methylamino]-1-(5-phospho-beta-D-ribosyl)imidazole-4-carboxamide. It functions in the pathway amino-acid biosynthesis; L-histidine biosynthesis; L-histidine from 5-phospho-alpha-D-ribose 1-diphosphate: step 4/9. The polypeptide is 1-(5-phosphoribosyl)-5-[(5-phosphoribosylamino)methylideneamino] imidazole-4-carboxamide isomerase (Pseudomonas putida (strain W619)).